Reading from the N-terminus, the 373-residue chain is MARDFYEILGVSRSADAEELKRAYRRLARKYHPDVNKEPGAEEKFKEINRAYEVLSDPQARANYDRFGEAGVSGVGAAGFSDFGIGDMGGFADIFETFFGGFTTSSRRQQGPTRGEDLRYDLKLEFREAVFGGEKEIRINHLETCKTCQGTGAKPGTRPVTCSTCGGVGQVRRSARTPFGSFTQLTTCPTCGGSGVVIEDRCESCGGQGHIQVSKKLKITIPAGVDNGTRLRVSGEGDAGLRGGPPGDLYVYLFVQPDPEFQREGNNILSRIKISYLQAILGCRISVSTVDGEAELKIPAGTQPGTVLVLEGRGVPRVGNPVARGDHLITVDVEIPTHITHEERELLEKLAKIRGERLGKGGLEGFLGSLFGG.

The 65-residue stretch at 4 to 68 (DFYEILGVSR…QARANYDRFG (65 aa)) folds into the J domain. The segment at 132-214 (GGEKEIRINH…CGGQGHIQVS (83 aa)) adopts a CR-type zinc-finger fold. 8 residues coordinate Zn(2+): C145, C148, C162, C165, C188, C191, C202, and C205. CXXCXGXG motif repeat units follow at residues 145–152 (CKTCQGTG), 162–169 (CSTCGGVG), 188–195 (CPTCGGSG), and 202–209 (CESCGGQG).

Belongs to the DnaJ family. Homodimer. Zn(2+) is required as a cofactor.

The protein localises to the cytoplasm. Participates actively in the response to hyperosmotic and heat shock by preventing the aggregation of stress-denatured proteins and by disaggregating proteins, also in an autonomous, DnaK-independent fashion. Unfolded proteins bind initially to DnaJ; upon interaction with the DnaJ-bound protein, DnaK hydrolyzes its bound ATP, resulting in the formation of a stable complex. GrpE releases ADP from DnaK; ATP binding to DnaK triggers the release of the substrate protein, thus completing the reaction cycle. Several rounds of ATP-dependent interactions between DnaJ, DnaK and GrpE are required for fully efficient folding. Also involved, together with DnaK and GrpE, in the DNA replication of plasmids through activation of initiation proteins. The protein is Chaperone protein DnaJ of Thermosynechococcus vestitus (strain NIES-2133 / IAM M-273 / BP-1).